The following is a 368-amino-acid chain: mRNA export factor (368 aa).

The interval 15-34 is disordered; that stretch reads TSMFGSTTTDNHNPMKDIEV. WD repeat units lie at residues 37-79, 84-114, 125-157, 168-206, 215-255, 271-301, and 310-346; these read SPDD…QTIP, MHTGPVLDVCWSDDGSKVFTASCDKTAKMWD, QHDAPVKTIHWIKAPNYSCVMTGSWDKTLKFWD, QLPERCYCADVIYPMAVVATAERGLIVYQLENQPSEFRR, HRCV…KDNF, QDIYAVNGIAFHPVHGTLATVGSDGRFSFWD, and TSEQLDQPIAACCFNHNGNIFAYASSYDWSKGHEFYN. At Thr229 the chain carries Phosphothreonine.

Belongs to the WD repeat rae1 family. Interacts with NUMA1 (via N-terminal end of the coiled-coil domain); this interaction promotes spindle formation in mitosis. Interacts with NUP98. Interacts with MYCBP2. Interacts with USP11.

It localises to the cytoplasm. The protein localises to the nucleus. Its subcellular location is the cytoskeleton. The protein resides in the spindle pole. Plays a role in mitotic bipolar spindle formation. Binds mRNA. May function in nucleocytoplasmic transport and in directly or indirectly attaching cytoplasmic mRNPs to the cytoskeleton. The protein is mRNA export factor (Rae1) of Mus musculus (Mouse).